We begin with the raw amino-acid sequence, 415 residues long: Low affinity tryptophan permease (415 aa).

Residues 1–11 (MTDQAEKKHSA) lie on the Cytoplasmic side of the membrane. A helical transmembrane segment spans residues 12 to 32 (FWGVMVIAGTVIGGGMFALPV). Asp33 is a topological domain (periplasmic). Residues 34–54 (LAGAWFFWGAFILIIAWFSML) traverse the membrane as a helical segment. At 55 to 86 (HSGLLLLEANLNYPVGSSFNTITKDLIGNTWN) the chain is on the cytoplasmic side. Residues 87 to 107 (IISGITVAFVLYILTYAYISA) traverse the membrane as a helical segment. The Periplasmic portion of the chain corresponds to 108–127 (NGAIISETISMNLGYHANPR). Residues 128 to 148 (IVGICTAIFVASVLWLSSLAA) form a helical membrane-spanning segment. Over 149-153 (SRITS) the chain is Cytoplasmic. Residues 154–174 (LFLGLKIISFVIVFGSFFFQV) form a helical membrane-spanning segment. Over 175-191 (DYSILRDATSSTAGTSY) the chain is Periplasmic. A helical transmembrane segment spans residues 192–212 (FPYIFMALPVCLASFGFHGNI). At 213-229 (PSLIICYGKRKDKLIKS) the chain is on the cytoplasmic side. A helical transmembrane segment spans residues 230–250 (VVFGSLLALVIYLFWLYCTMG). Over 251-286 (NIPRESFKAIISSGGNVDSLVKSFLGTKQHGIIEFC) the chain is Periplasmic. The chain crosses the membrane as a helical span at residues 287–307 (LLVFSNLAVASSFFGVTLGLF). The Cytoplasmic portion of the chain corresponds to 308–326 (DYLADLFKIDNSHGGRFKT). The chain crosses the membrane as a helical span at residues 327–347 (VLLTFLPPALLYLIFPNGFIY). A topological domain (periplasmic) is located at residue Gly348. Residues 349–369 (IGGAGLCATIWAVIIPAVLAI) traverse the membrane as a helical segment. Residues 370 to 387 (KARKKFPNQMFTVWGGNL) lie on the Cytoplasmic side of the membrane. Residues 388–408 (IPAIVILFGITVILCWFGNVF) form a helical membrane-spanning segment. Over 409-415 (NVLPKFG) the chain is Periplasmic.

This sequence belongs to the amino acid/polyamine transporter 2 family. Mtr/TnaB/TyrP permease subfamily.

It localises to the cell inner membrane. In terms of biological role, involved in tryptophan transport across the cytoplasmic membrane. Plays a role in transporting tryptophan which is to be used catabolically. This chain is Low affinity tryptophan permease (tnaB), found in Escherichia coli (strain K12).